A 342-amino-acid chain; its full sequence is Serine/threonine-protein kinase-transforming protein mos (342 aa).

Residues 63 to 338 (VCLMHRLGSG…LLQRDLKAFR (276 aa)) form the Protein kinase domain. ATP contacts are provided by residues 69-77 (LGSGGFGSV) and lysine 90. The active-site Proton acceptor is aspartate 198.

The protein belongs to the protein kinase superfamily. Ser/Thr protein kinase family.

It catalyses the reaction L-seryl-[protein] + ATP = O-phospho-L-seryl-[protein] + ADP + H(+). The catalysed reaction is L-threonyl-[protein] + ATP = O-phospho-L-threonyl-[protein] + ADP + H(+). The protein is Serine/threonine-protein kinase-transforming protein mos (V-MOS) of Myeloproliferative sarcoma virus (isolate ts159).